A 249-amino-acid chain; its full sequence is Pleckstrin homology domain-containing family F member 2 (249 aa).

Phosphoserine is present on Ser-16. The PH domain occupies 35 to 131; the sequence is VLIGEGVLTK…WMNHINKCVT (97 aa). N6-acetyllysine is present on Lys-44. The FYVE-type zinc-finger motif lies at 152 to 212; sequence DSEATVCMRC…ICDFCYDLLS (61 aa). Positions 158, 161, 175, 178, 183, 186, 204, and 207 each coordinate Zn(2+). Residues 221 to 233 show a composition bias toward polar residues; sequence PARSDSYSQSLKS. The segment at 221–249 is disordered; that stretch reads PARSDSYSQSLKSPLNDMSDDDDDDDSSD. A compositionally biased stretch (acidic residues) spans 238–249; it reads MSDDDDDDDSSD. Phosphoserine occurs at positions 239 and 248.

As to quaternary structure, may interact with EEA1. Expressed in placenta, ovary and small intestine, as well as in heart and pancreas. Also expressed in peripheral blood mononuclear cells and dendritic cells.

It localises to the early endosome membrane. The protein resides in the endoplasmic reticulum. Its function is as follows. May play a role in early endosome fusion upstream of RAB5, hence regulating receptor trafficking and fluid-phase transport. Enhances cellular sensitivity to TNF-induced apoptosis. The protein is Pleckstrin homology domain-containing family F member 2 (PLEKHF2) of Homo sapiens (Human).